Consider the following 236-residue polypeptide: Probable ascorbate-specific transmembrane electron transporter 2 (236 aa).

Residues 1-11 (MAAGLGVKAAP) are Cytoplasmic-facing. The helical transmembrane segment at 12-32 (FTYVAHALAVAAAVMVLVWCI) threads the bilayer. Residues 15–219 (VAHALAVAAA…FGAAVVVAAV (205 aa)) enclose the Cytochrome b561 domain. The Extracellular portion of the chain corresponds to 33-53 (SFRGGLAFEADNKNLIFNVHP). Heme b is bound at residue His52. Residues 54–74 (VLMLIGYIILGSEAIMIYKIF) form a helical membrane-spanning segment. Residue 67 to 75 (AIMIYKIFP) coordinates L-ascorbate. At 75–84 (PKLNHDTTKL) the chain is on the cytoplasmic side. Residues 85 to 105 (IHLILHAIAIVLGAVGIYCAF) traverse the membrane as a helical segment. Heme b contacts are provided by His86 and His120. Over 106–122 (KFHNESGIANLYSLHSW) the chain is Extracellular. 116–125 (LYSLHSWLGI) is a binding site for monodehydro-L-ascorbate radical. The chain crosses the membrane as a helical span at residues 123-143 (LGIGTISLYGIQWIFGFVAFF). Residues 144–153 (YPGAAPHVRR) are Cytoplasmic-facing. The helical transmembrane segment at 154 to 174 (GALPWHVLFGLFVYVLTLATA) threads the bilayer. Heme b is bound at residue His159. Residues 175–196 (ELGLLEKLTFLQSSGLDKYGAE) lie on the Extracellular side of the membrane. Residues 197–217 (AFLVNFTGLVVALFGAAVVVA) traverse the membrane as a helical segment. Residues 218–236 (AVAPAHVEEPEGYAPIPVN) lie on the Cytoplasmic side of the membrane.

Heme b serves as cofactor.

It is found in the membrane. Its function is as follows. Two-heme-containing cytochrome. Catalyzes ascorbate-dependent trans-membrane electron transfer by utilizing a concerted H(+)/e(-) transfer mechanism. The chain is Probable ascorbate-specific transmembrane electron transporter 2 from Oryza sativa subsp. japonica (Rice).